The sequence spans 430 residues: S-adenosylmethionine synthase (430 aa).

H14 is an ATP binding site. D16 is a Mg(2+) binding site. Residue E42 participates in K(+) binding. L-methionine-binding residues include E55 and Q98. Positions 98-108 (QSADINRGVER) are flexible loop. ATP is bound by residues 164 to 166 (DAK), 254 to 255 (KF), D263, 269 to 270 (RK), A286, and K290. L-methionine is bound at residue D263. K294 is a binding site for L-methionine.

The protein belongs to the AdoMet synthase family. As to quaternary structure, homotetramer; dimer of dimers. The cofactor is Mg(2+). It depends on K(+) as a cofactor.

It is found in the cytoplasm. It carries out the reaction L-methionine + ATP + H2O = S-adenosyl-L-methionine + phosphate + diphosphate. Its pathway is amino-acid biosynthesis; S-adenosyl-L-methionine biosynthesis; S-adenosyl-L-methionine from L-methionine: step 1/1. Functionally, catalyzes the formation of S-adenosylmethionine (AdoMet) from methionine and ATP. The overall synthetic reaction is composed of two sequential steps, AdoMet formation and the subsequent tripolyphosphate hydrolysis which occurs prior to release of AdoMet from the enzyme. This Phocaeicola vulgatus (strain ATCC 8482 / DSM 1447 / JCM 5826 / CCUG 4940 / NBRC 14291 / NCTC 11154) (Bacteroides vulgatus) protein is S-adenosylmethionine synthase.